We begin with the raw amino-acid sequence, 234 residues long: MNIKTFEFYLFDIEGTTTPIEFVHKILFPYSVEKFDSFFQSNLLEKEWIEKLILEGKNDTTYSGKLSDSAFDLSEYCKHLVSLDRKSGILKEIQGRIWKSGYENGELKSSMFSDVPSFLKKIQASKKKSAVYSSGSIQAQKLIFEYSDFGNLTHFFYAYFDTGVGGKRESSSYSKISEQLGVAPEKILFFTDIKEEADAAKEAKLHSAILERPGNYPQPQHSHFKISSFEGLNP.

A disordered region spans residues 212 to 234 (RPGNYPQPQHSHFKISSFEGLNP).

This sequence belongs to the HAD-like hydrolase superfamily. MasA/MtnC family. As to quaternary structure, monomer. Requires Mg(2+) as cofactor.

The catalysed reaction is 5-methylsulfanyl-2,3-dioxopentyl phosphate + H2O = 1,2-dihydroxy-5-(methylsulfanyl)pent-1-en-3-one + phosphate. The protein operates within amino-acid biosynthesis; L-methionine biosynthesis via salvage pathway; L-methionine from S-methyl-5-thio-alpha-D-ribose 1-phosphate: step 3/6. It participates in amino-acid biosynthesis; L-methionine biosynthesis via salvage pathway; L-methionine from S-methyl-5-thio-alpha-D-ribose 1-phosphate: step 4/6. Its function is as follows. Bifunctional enzyme that catalyzes the enolization of 2,3-diketo-5-methylthiopentyl-1-phosphate (DK-MTP-1-P) into the intermediate 2-hydroxy-3-keto-5-methylthiopentenyl-1-phosphate (HK-MTPenyl-1-P), which is then dephosphorylated to form the acireductone 1,2-dihydroxy-3-keto-5-methylthiopentene (DHK-MTPene). This Leptospira interrogans serogroup Icterohaemorrhagiae serovar copenhageni (strain Fiocruz L1-130) protein is Enolase-phosphatase E1.